The chain runs to 78 residues: Translation initiation factor IF-1, chloroplastic (78 aa).

The S1-like domain maps to 1–72 (MKKQNLIEME…TKGRITYRLR (72 aa)).

The protein belongs to the IF-1 family. As to quaternary structure, component of the 30S ribosomal translation pre-initiation complex which assembles on the 30S ribosome in the order IF-2 and IF-3, IF-1 and N-formylmethionyl-tRNA(fMet); mRNA recruitment can occur at any time during PIC assembly.

Its subcellular location is the plastid. The protein resides in the chloroplast. One of the essential components for the initiation of protein synthesis. Stabilizes the binding of IF-2 and IF-3 on the 30S subunit to which N-formylmethionyl-tRNA(fMet) subsequently binds. Helps modulate mRNA selection, yielding the 30S pre-initiation complex (PIC). Upon addition of the 50S ribosomal subunit IF-1, IF-2 and IF-3 are released leaving the mature 70S translation initiation complex. The protein is Translation initiation factor IF-1, chloroplastic of Chaetosphaeridium globosum (Charophycean green alga).